Reading from the N-terminus, the 422-residue chain is Histidine--tRNA ligase (422 aa).

Belongs to the class-II aminoacyl-tRNA synthetase family. As to quaternary structure, homodimer.

It is found in the cytoplasm. It catalyses the reaction tRNA(His) + L-histidine + ATP = L-histidyl-tRNA(His) + AMP + diphosphate + H(+). The sequence is that of Histidine--tRNA ligase from Lysinibacillus sphaericus (strain C3-41).